The following is a 901-amino-acid chain: HTH-type transcriptional regulator MalT (901 aa).

39 to 46 provides a ligand contact to ATP; sequence SPAGYGKT. In terms of domain architecture, HTH luxR-type spans 829 to 894; it reads ELIRTSPLTQ…DAVQHAQQLL (66 aa). A DNA-binding region (H-T-H motif) is located at residues 853-872; it reads NEQIAGELEVAATTIKTHIR.

Belongs to the MalT family. Monomer in solution. Oligomerizes to an active state in the presence of the positive effectors ATP and maltotriose.

Its activity is regulated as follows. Activated by ATP and maltotriose, which are both required for DNA binding. Its function is as follows. Positively regulates the transcription of the maltose regulon whose gene products are responsible for uptake and catabolism of malto-oligosaccharides. Specifically binds to the promoter region of its target genes, recognizing a short DNA motif called the MalT box. This Escherichia coli (strain ATCC 8739 / DSM 1576 / NBRC 3972 / NCIMB 8545 / WDCM 00012 / Crooks) protein is HTH-type transcriptional regulator MalT.